Reading from the N-terminus, the 142-residue chain is Hemoglobin subunit alpha (142 aa).

At Ser-1 the chain carries N-acetylserine. The Globin domain occupies 1–142 (SLSEKNKAAV…VALALADRYR (142 aa)). His-59 contributes to the O2 binding site. Residue His-88 participates in heme b binding.

This sequence belongs to the globin family. Heterotetramer of two alpha chains and two beta chains. As to expression, red blood cells.

Its function is as follows. Involved in oxygen transport from gills to the various peripheral tissues. This is Hemoglobin subunit alpha (hba) from Pagothenia borchgrevinki (Bald rockcod).